We begin with the raw amino-acid sequence, 656 residues long: Squalene-hopene cyclase (656 aa).

The PFTB 1 repeat unit spans residues 68–110; it reads EQKIANYLRRCQSREHWGWPVYYGGEFNISASVQAYFALKMTG. D396 functions as the Proton donor in the catalytic mechanism. PFTB repeat units lie at residues 417-459, 485-525, 533-582, and 591-634; these read LDRA…ALLD, IERG…NASG, VLKC…GLMA, and VKRG…QFFP.

The protein belongs to the terpene cyclase/mutase family.

The catalysed reaction is squalene = hop-22(29)-ene. It catalyses the reaction squalene + H2O = hopan-22-ol. Its function is as follows. Squalene cyclase that catalyzes the oxygen-independent cyclization of squalene into hopanoids, a class of cyclic triterpenoids including hop-22(29)-ene, hop-17(21)-ene, hop-21(22)-ene, and hopan-22-ol. The polypeptide is Squalene-hopene cyclase (Schizosaccharomyces japonicus (strain yFS275 / FY16936) (Fission yeast)).